The following is a 105-amino-acid chain: Large ribosomal subunit protein eL30 (105 aa).

Belongs to the eukaryotic ribosomal protein eL30 family.

This chain is Large ribosomal subunit protein eL30 (RPL30), found in Eremothecium gossypii (strain ATCC 10895 / CBS 109.51 / FGSC 9923 / NRRL Y-1056) (Yeast).